A 547-amino-acid polypeptide reads, in one-letter code: MFS-type transporter M6 (547 aa).

The segment at 1-45 (MHRRRRDNLMTPAEMVASMKPPQSLSTEDDDGSRRDSESSADVLK) is disordered. A helical membrane pass occupies residues 81-101 (VLVVASFAAAISPFSTSTYYP). Asparagine 118 carries an N-linked (GlcNAc...) asparagine glycan. Residues 146-166 (PMFLVCFAIYFVANVGLALQN) traverse the membrane as a helical segment. Asparagine 167 is a glycosylation site (N-linked (GlcNAc...) asparagine). 2 consecutive transmembrane segments (helical) span residues 206 to 226 (LIYA…IGGL) and 236 to 256 (VFWF…IFFG). An N-linked (GlcNAc...) asparagine glycan is attached at asparagine 274. The next 5 membrane-spanning stretches (helical) occupy residues 317 to 337 (FILS…TSVL), 347 to 367 (YDAV…LLAY), 407 to 427 (LGFV…YGWQ), 432 to 452 (APLA…TGVM), and 469 to 489 (AVGA…VAVV). Asparagine 493 carries an N-linked (GlcNAc...) asparagine glycan. A helical transmembrane segment spans residues 496–516 (AGIGWTATVTAGLWVLMMPTL).

Belongs to the major facilitator superfamily. CAR1 family.

The protein localises to the membrane. Its function is as follows. MFS-type transporter; part of the gene cluster that mediates the biosynthesis of squalestatin S1 (SQS1, also known as zaragozic acid A), a heavily oxidized fungal polyketide that offers potent cholesterol lowering activity by targeting squalene synthase (SS). In Phoma sp. (strain ATCC 20986 / MF5453), this protein is MFS-type transporter M6.